Reading from the N-terminus, the 254-residue chain is L-erythrulose-1-phosphate isomerase (254 aa).

Residue His97 is the Electrophile of the active site. Catalysis depends on Glu170, which acts as the Proton acceptor. Positions 176 and 213 each coordinate substrate.

It belongs to the triosephosphate isomerase family. In terms of assembly, homodimer.

Its subcellular location is the cytoplasm. The enzyme catalyses L-erythrulose 1-phosphate = D-erythrulose 4-phosphate. The protein operates within carbohydrate metabolism; erythritol degradation. Functionally, catalyzes the isomerization of D-erythrulose-4P to L-erythrulose-1P. This chain is L-erythrulose-1-phosphate isomerase, found in Mesorhizobium japonicum (strain LMG 29417 / CECT 9101 / MAFF 303099) (Mesorhizobium loti (strain MAFF 303099)).